We begin with the raw amino-acid sequence, 257 residues long: Imidazole glycerol phosphate synthase subunit HisF (257 aa).

Active-site residues include aspartate 12 and aspartate 131.

The protein belongs to the HisA/HisF family. In terms of assembly, heterodimer of HisH and HisF.

Its subcellular location is the cytoplasm. It carries out the reaction 5-[(5-phospho-1-deoxy-D-ribulos-1-ylimino)methylamino]-1-(5-phospho-beta-D-ribosyl)imidazole-4-carboxamide + L-glutamine = D-erythro-1-(imidazol-4-yl)glycerol 3-phosphate + 5-amino-1-(5-phospho-beta-D-ribosyl)imidazole-4-carboxamide + L-glutamate + H(+). It participates in amino-acid biosynthesis; L-histidine biosynthesis; L-histidine from 5-phospho-alpha-D-ribose 1-diphosphate: step 5/9. Functionally, IGPS catalyzes the conversion of PRFAR and glutamine to IGP, AICAR and glutamate. The HisF subunit catalyzes the cyclization activity that produces IGP and AICAR from PRFAR using the ammonia provided by the HisH subunit. In Burkholderia lata (strain ATCC 17760 / DSM 23089 / LMG 22485 / NCIMB 9086 / R18194 / 383), this protein is Imidazole glycerol phosphate synthase subunit HisF.